A 190-amino-acid chain; its full sequence is CASP-like protein 1E2 (190 aa).

Low complexity predominate over residues 1 to 12; it reads MENEGKNNMNGM. Positions 1–24 are disordered; it reads MENEGKNNMNGMEMEKGKRESRSR. At 1 to 28 the chain is on the cytoplasmic side; it reads MENEGKNNMNGMEMEKGKRESRSRKGVE. Positions 13 to 24 are enriched in basic and acidic residues; the sequence is EMEKGKRESRSR. Residues 29-49 form a helical membrane-spanning segment; sequence LTMRVLALVLTMAAATVLGVA. Residues 50–83 are Extracellular-facing; the sequence is KQTKVVSIKLIPALPPLDITTTAKASYLSAFVYN. The chain crosses the membrane as a helical span at residues 84–104; it reads ISANAIACGYTAISIAILMIS. Over 105 to 111 the chain is Cytoplasmic; that stretch reads RGRRSKK. The chain crosses the membrane as a helical span at residues 112–132; that stretch reads LLMAVLLGDLVMVALLFSGTG. Topologically, residues 133–163 are extracellular; the sequence is AASAIGLMGLQGNKHVMWNKVCGVFGKFCHR. Residues 164 to 184 form a helical membrane-spanning segment; sequence AAPSLPLTFLAAVVFMFLVVL. Topologically, residues 185-190 are cytoplasmic; that stretch reads DAIKLP.

This sequence belongs to the Casparian strip membrane proteins (CASP) family. Homodimer and heterodimers.

The protein localises to the cell membrane. This Arabidopsis lyrata subsp. lyrata (Lyre-leaved rock-cress) protein is CASP-like protein 1E2.